Here is a 3584-residue protein sequence, read N- to C-terminus: D-lysergyl-peptide-synthetase subunit 1 (3584 aa).

The disordered stretch occupies residues 25-44; that stretch reads IESINGDKNKSERHTASSSA. Basic and acidic residues predominate over residues 29-39; sequence NGDKNKSERHT. Residues 307-706 form an adenylation (A) domain 1 region; the sequence is SCCSRPNSQA…LGRKDDQVKI (400 aa). Residues 848–917 enclose the Carrier 1 domain; sequence REKLLQALFA…TLREIVIVST (70 aa). Ser880 is subject to O-(pantetheine 4'-phosphoryl)serine. The tract at residues 962–1353 is condensation (C) domain 1; it reads EDIYPCTHLQ…EHILTQIHSN (392 aa). The adenylation (A) domain 2 stretch occupies residues 1396-1803; it reads QAKCQAQPDA…RRKDAQVKIR (408 aa). Positions 1948–2016 constitute a Carrier 2 domain; that stretch reads TEHEISAIWA…TIRKLALARG (69 aa). The residue at position 1980 (Ser1980) is an O-(pantetheine 4'-phosphoryl)serine. Residues 2066 to 2483 form a condensation (C) domain 2 region; sequence ERIYPCSPIQ…ALPVLDEDQM (418 aa). Residues 2508-2906 are adenylation (A) domain 3; it reads QCIRCPDSPS…GRNDDQVKVR (399 aa). The 69-residue stretch at 3041–3109 folds into the Carrier 3 domain; that stretch reads MEAELQQLVG…RLSDLARIVE (69 aa). An O-(pantetheine 4'-phosphoryl)serine modification is found at Ser3073. The cyclization (Cyc) domain stretch occupies residues 3174 to 3472; that stretch reads LYFSKPMASE…VAKSTTWSSD (299 aa).

Belongs to the NRP synthetase family.

The protein operates within alkaloid biosynthesis; ergot alkaloid biosynthesis. D-lysergyl-peptide-synthetase subunit 1; part of the gene cluster that mediates the biosynthesis of fungal ergot alkaloid. DmaW catalyzes the first step of ergot alkaloid biosynthesis by condensing dimethylallyl diphosphate (DMAP) and tryptophan to form 4-dimethylallyl-L-tryptophan. The second step is catalyzed by the methyltransferase easF that methylates 4-dimethylallyl-L-tryptophan in the presence of S-adenosyl-L-methionine, resulting in the formation of 4-dimethylallyl-L-abrine. The catalase easC and the FAD-dependent oxidoreductase easE then transform 4-dimethylallyl-L-abrine to chanoclavine-I which is further oxidized by easD in the presence of NAD(+), resulting in the formation of chanoclavine-I aldehyde. Agroclavine dehydrogenase easG then mediates the conversion of chanoclavine-I aldehyde to agroclavine via a non-enzymatic adduct reaction: the substrate is an iminium intermediate that is formed spontaneously from chanoclavine-I aldehyde in the presence of glutathione. The presence of easA is not required to complete this reaction. Further conversion of agroclavine to paspalic acid is a two-step process involving oxidation of agroclavine to elymoclavine and of elymoclavine to paspalic acid, the second step being performed by the elymoclavine oxidase cloA. Paspalic acid is then further converted to D-lysergic acid. Ergopeptines are assembled from D-lysergic acid and three different amino acids by the D-lysergyl-peptide-synthetases composed each of a monomudular and a trimodular nonribosomal peptide synthetase subunit. LpsB and lpsC encode the monomodular subunits responsible for D-lysergic acid activation and incorporation into the ergopeptine backbone. LpsA1 and A2 subunits encode the trimodular nonribosomal peptide synthetase assembling the tripeptide portion of ergopeptines. LpsA1 is responsible for formation of the major ergopeptine, ergotamine, and lpsA2 for alpha-ergocryptine, the minor ergopeptine of the total alkaloid mixture elaborated by C.purpurea. D-lysergyl-tripeptides are assembled by the nonribosomal peptide synthetases and released as N-(D-lysergyl-aminoacyl)-lactams. Cyclolization of the D-lysergyl-tripeptides is performed by the Fe(2+)/2-ketoglutarate-dependent dioxygenase easH which introduces a hydroxyl group into N-(D-lysergyl-aminoacyl)-lactam at alpha-C of the aminoacyl residue followed by spontaneous condensation with the terminal lactam carbonyl group. This is D-lysergyl-peptide-synthetase subunit 1 from Claviceps purpurea (strain 20.1) (Ergot fungus).